The chain runs to 373 residues: uncharacterized protein (373 aa).

Positions 15–101 constitute a WSC domain; that stretch reads DFTYLGCYSS…SDSYSVYVDE (87 aa). 3 disordered regions span residues 101–171, 183–210, and 291–316; these read ESEE…SSLS, FSFSQSSSSSSTTSSSTPSSESVRITTS, and NLSEKRASSILASSSRQPPAGSRGAA. Low complexity-rich tracts occupy residues 110-171 and 183-204; these read SSAQ…SSLS and FSFSQSSSSSSTTSSSTPSSES.

This is an uncharacterized protein from Pichia angusta (Yeast).